A 632-amino-acid polypeptide reads, in one-letter code: MNIRSNPDTTLPAVTTGPLPSSRKIFSTPEAAPDLRVPLREIILTEGAGEPNLPVYDTSGPYTDPAVVIDVNAGLPRTRMAWVKERGGIEEYEGREIKPEDNGNVGASHAAAAFKAHHKPVRGVGDAPITQLEFARAGIITKEMIYVAERENIGRKQQLERAEAALKDGESFGADIPAFITPEFVRSEIARGRAIIPCNINHAELEPMIIGRNFLTKINANIGNSAVTSSVEEEVDKMVWAIRWGADTVMDLSTGRNIHTTREWILRNAPIPIGTVPIYQALEKCEGDPVKLTWELYRDTLVEQCEQGVDYFTIHAGVRLPYIHLTANRVTGIVSRGGSIMAKWCLAHHKESFLYTHFEEICDLMRKYDVSFSLGDGLRPGSIADANDRAQFAELETLGELTQIAWKKGCQVMIEGPGHVPMHKIKINMDKQLKECGEAPFYTLGPLTTDIAPGYDHITSGIGAAMIGWFGCAMLCYVTPKEHLGLPNRNDVKTGVITYKISAHASDLAKGHPAAQLRDDALSRARFDFRWEDQFNLGLDPDTAMAFHDETLPKEAHKVAHFCSMCGPKFCSMKITQDVRDYAATLNDPEAVGLPHAGTAEEGMAQMSKKFMDMGGNVYVEADSVKESNKAL.

A compositionally biased stretch (polar residues) spans 1-13; the sequence is MNIRSNPDTTLPA. Residues 1–26 form a disordered region; that stretch reads MNIRSNPDTTLPAVTTGPLPSSRKIF. Residues N221, M250, Y279, H315, 335 to 337, 376 to 379, and E415 contribute to the substrate site; these read SRG and DGLR. H419 contacts Zn(2+). Substrate is bound at residue Y442. Position 483 (H483) interacts with Zn(2+). 3 residues coordinate [4Fe-4S] cluster: C563, C566, and C571.

It belongs to the ThiC family. In terms of assembly, homodimer. It depends on [4Fe-4S] cluster as a cofactor.

It catalyses the reaction 5-amino-1-(5-phospho-beta-D-ribosyl)imidazole + S-adenosyl-L-methionine = 4-amino-2-methyl-5-(phosphooxymethyl)pyrimidine + CO + 5'-deoxyadenosine + formate + L-methionine + 3 H(+). Its pathway is cofactor biosynthesis; thiamine diphosphate biosynthesis. Functionally, catalyzes the synthesis of the hydroxymethylpyrimidine phosphate (HMP-P) moiety of thiamine from aminoimidazole ribotide (AIR) in a radical S-adenosyl-L-methionine (SAM)-dependent reaction. The chain is Phosphomethylpyrimidine synthase from Afipia carboxidovorans (strain ATCC 49405 / DSM 1227 / KCTC 32145 / OM5) (Oligotropha carboxidovorans).